We begin with the raw amino-acid sequence, 447 residues long: Cysteine--tRNA ligase (447 aa).

Position 28 (Cys-28) interacts with Zn(2+). A 'HIGH' region motif is present at residues 30-40 (PTVYNYIHIGN). Zn(2+) is bound by residues Cys-211, His-236, and Glu-240. The 'KMSKS' region signature appears at 268–272 (KMSKS). Lys-271 is a binding site for ATP.

The protein belongs to the class-I aminoacyl-tRNA synthetase family. In terms of assembly, monomer. Zn(2+) serves as cofactor.

Its subcellular location is the cytoplasm. The enzyme catalyses tRNA(Cys) + L-cysteine + ATP = L-cysteinyl-tRNA(Cys) + AMP + diphosphate. This chain is Cysteine--tRNA ligase, found in Streptococcus agalactiae serotype III (strain NEM316).